The sequence spans 417 residues: Secernin-3 (417 aa).

Residues 1 to 5 (MYPRS) constitute a propeptide that is removed on maturation. C6 is a catalytic residue. C6 carries the post-translational modification Glyoxylic acid (Cys); alternate. The residue at position 6 (C6) is a Pyruvic acid (Cys); alternate.

This sequence belongs to the peptidase C69 family. Secernin subfamily.

Functionally, plays a role in thermal nociception. In Danio rerio (Zebrafish), this protein is Secernin-3 (scrn3).